A 156-amino-acid polypeptide reads, in one-letter code: Holliday junction resolvase (156 aa).

Belongs to the RuvC family. Poxviruses-type subfamily. Mg(2+) serves as cofactor.

Functionally, nuclease that specifically cleaves and resolves four-way DNA Holliday junctions into linear duplex products. This chain is Holliday junction resolvase, found in Vertebrata (FPV).